Reading from the N-terminus, the 40-residue chain is Photosystem II reaction center protein J (40 aa).

Residues 8-28 form a helical membrane-spanning segment; it reads IPLWLIGTVTGILVIGLIGVF.

It belongs to the PsbJ family. In terms of assembly, PSII is composed of 1 copy each of membrane proteins PsbA, PsbB, PsbC, PsbD, PsbE, PsbF, PsbH, PsbI, PsbJ, PsbK, PsbL, PsbM, PsbT, PsbX, PsbY, PsbZ, Psb30/Ycf12, at least 3 peripheral proteins of the oxygen-evolving complex and a large number of cofactors. It forms dimeric complexes.

The protein resides in the plastid. It localises to the chloroplast thylakoid membrane. In terms of biological role, one of the components of the core complex of photosystem II (PSII). PSII is a light-driven water:plastoquinone oxidoreductase that uses light energy to abstract electrons from H(2)O, generating O(2) and a proton gradient subsequently used for ATP formation. It consists of a core antenna complex that captures photons, and an electron transfer chain that converts photonic excitation into a charge separation. The protein is Photosystem II reaction center protein J of Nymphaea alba (White water-lily).